We begin with the raw amino-acid sequence, 729 residues long: Leucine-rich repeat flightless-interacting protein 1 (729 aa).

Thr2 carries the N-acetylthreonine modification. Ser16 carries the post-translational modification Phosphoserine. The span at 40-65 shows a compositional bias: basic and acidic residues; the sequence is IRMKELERQQKEVEERPDKDFAEKGS. The segment at 40–98 is disordered; it reads IRMKELERQQKEVEERPDKDFAEKGSRNMPSLSAATLASLGGTSSRRGSGDTSISMDTE. Positions 78–94 are enriched in low complexity; sequence SLGGTSSRRGSGDTSIS. 6 positions are modified to phosphoserine: Ser83, Ser84, Ser88, Asp90, Ser92, and Thr97. The stretch at 94-194 forms a coiled coil; sequence SMDTEASIRE…LRQREEMLEK (101 aa). Lys249 is covalently cross-linked (Glycyl lysine isopeptide (Lys-Gly) (interchain with G-Cter in SUMO1)). The disordered stretch occupies residues 253-729; sequence VEKVGQRETL…SKSKEDCTMS (477 aa). The segment covering 260–272 has biased composition (polar residues); sequence ETLQNSEQEQPKP. Residues 277 to 297 are compositionally biased toward basic and acidic residues; the sequence is DCVDRGVSHPGEKAENQRPAE. At Ser302 the chain carries Phosphoserine. A compositionally biased stretch (polar residues) spans 313–326; that stretch reads QQVQSQDQENTSDL. Basic and acidic residues predominate over residues 327-343; it reads KNSEQIESHKVTNKSDS. Residues 344–354 show a composition bias toward polar residues; the sequence is RASNSPEQSSC. 2 positions are modified to phosphoserine: Ser346 and Ser348. Composition is skewed to basic and acidic residues over residues 435-445 and 482-494; these read KGTENHGESCL and KADD…EKPI. The tract at residues 465–567 is DNA-binding; sequence EEAIVQIPQA…KNKKKKAATP (103 aa). Positions 506 to 523 are enriched in polar residues; sequence INQSGHQDTTGPGSTDAQ. Residues Ser538 and Ser547 each carry the phosphoserine modification. A compositionally biased stretch (basic residues) spans 550–564; it reads KKTKNKKKKNKKKKA. The span at 608-618 shows a compositional bias: basic and acidic residues; the sequence is QKIRAGSREPV. 2 positions are modified to phosphoserine: Ser614 and Ser670. Polar residues-rich tracts occupy residues 667–684 and 693–710; these read CDTS…SQHG and LDNS…SESG. Basic and acidic residues predominate over residues 713-729; it reads AREEVGNSKSKEDCTMS.

Belongs to the LRRFIP family. In terms of assembly, homodimer. May also form higher oligomers. Interacts with FLII. Interacts with MYD88. Competes with FLII for MyD88-binding, even in the absence of LPS. In terms of tissue distribution, ubiquitously expressed.

It localises to the nucleus. The protein resides in the cytoplasm. In terms of biological role, transcriptional repressor which preferentially binds to the GC-rich consensus sequence (5'-AGCCCCCGGCG-3') and may regulate expression of TNF, EGFR and PDGFA. May control smooth muscle cells proliferation following artery injury through PDGFA repression. May also bind double-stranded RNA. Positively regulates Toll-like receptor (TLR) signaling in response to agonist probably by competing with the negative FLII regulator for MYD88-binding. The protein is Leucine-rich repeat flightless-interacting protein 1 (Lrrfip1) of Mus musculus (Mouse).